The following is a 253-amino-acid chain: NAD-dependent protein deacetylase (253 aa).

The region spanning Ala3 to Asn253 is the Deacetylase sirtuin-type domain. NAD(+)-binding residues include Ala29, Thr33, Phe40, Arg41, Gln106, Ile108, Asp109, and His126. Position 40 (Phe40) interacts with nicotinamide. Ile108 and Asp109 together coordinate nicotinamide. His126 (proton acceptor) is an active-site residue. Zn(2+)-binding residues include Cys134, Cys137, Cys159, and Cys162. Residues Ser200, Ser201, Asn225, Asp242, and Ile243 each contribute to the NAD(+) site.

Belongs to the sirtuin family. Class U subfamily. Zn(2+) is required as a cofactor.

It is found in the cytoplasm. It catalyses the reaction N(6)-acetyl-L-lysyl-[protein] + NAD(+) + H2O = 2''-O-acetyl-ADP-D-ribose + nicotinamide + L-lysyl-[protein]. NAD-dependent protein deacetylase which modulates the activities of several enzymes which are inactive in their acetylated form. This is NAD-dependent protein deacetylase from Rhodopseudomonas palustris (strain ATCC BAA-98 / CGA009).